The chain runs to 146 residues: Protein PBDC1 homolog (146 aa).

It belongs to the PBDC1 family.

The protein localises to the cytoplasm. This is Protein PBDC1 homolog from Saccharomyces cerevisiae (strain ATCC 204508 / S288c) (Baker's yeast).